Consider the following 1016-residue polypeptide: Coiled-coil domain-containing protein 57 (1016 aa).

Residues 1–503 form a centrosomal targeting domain region; the sequence is MLPLCSEREL…HGLLPGQEAQ (503 aa). Coiled coils occupy residues 14–607, 676–700, and 748–775; these read LARK…PVKT, SEVD…KHLK, and VTHL…LLEM. Disordered stretches follow at residues 500 to 519 and 549 to 573; these read QEAQ…DSPS and HLPP…DSTP. Residues 604–1016 are microtubule binding domain; it reads PVKTSVATAD…SRIRNYNLKD (413 aa). 2 disordered regions span residues 781-921 and 933-1016; these read AEQG…LASS and GSSP…NLKD. 2 stretches are compositionally biased toward polar residues: residues 846 to 859 and 934 to 945; these read QPHS…TNTP and SSPSGVPSQDNS.

Interacts with CEP63; the interaction is required for their location to proximal end of centrioles. Interacts with microtubules.

Its subcellular location is the cytoplasm. It localises to the cytoskeleton. The protein localises to the microtubule organizing center. It is found in the centrosome. The protein resides in the centriolar satellite. Its subcellular location is the centriole. It localises to the spindle. In terms of biological role, pleiotropic regulator of centriole duplication, mitosis, and ciliogenesis. Critical interface between centrosome and microtubule-mediated cellular processes. Centriole duplication protein required for recruitment of CEP63, CEP152, and PLK4 to the centrosome. Independent of its centrosomal targeting, localizes to and interacts with microtubules and regulates microtubule nucleation, stability, and mitotic progression. In Mus musculus (Mouse), this protein is Coiled-coil domain-containing protein 57.